Consider the following 141-residue polypeptide: MADRLTQLQDTVNQQAEHFCNSIGILQQCSVPSKFPGFERTGSQTPQQNQQEDYAQLFSTLISRCAKDIDTLIESLPSEESSIELQVQALKRLEIENQESAEKLEEVVRKGELLLEKIQAALSDIAQSQLDMQYSSSPKKQ.

Residues Glu-79–Leu-122 are a coiled coil.

It belongs to the Mediator complex subunit 21 family. Component of the Mediator complex.

The protein localises to the nucleus. In terms of biological role, component of the Mediator complex, a coactivator involved in the regulated transcription of nearly all RNA polymerase II-dependent genes. Mediator functions as a bridge to convey information from gene-specific regulatory proteins to the basal RNA polymerase II transcription machinery. Mediator is recruited to promoters by direct interactions with regulatory proteins and serves as a scaffold for the assembly of a functional preinitiation complex with RNA polymerase II and the general transcription factors. This is Mediator of RNA polymerase II transcription subunit 21 (MED21) from Aedes aegypti (Yellowfever mosquito).